Consider the following 558-residue polypeptide: Formate--tetrahydrofolate ligase (558 aa).

67–74 serves as a coordination point for ATP; it reads TPAGEGKT.

Belongs to the formate--tetrahydrofolate ligase family.

The enzyme catalyses (6S)-5,6,7,8-tetrahydrofolate + formate + ATP = (6R)-10-formyltetrahydrofolate + ADP + phosphate. The protein operates within one-carbon metabolism; tetrahydrofolate interconversion. In Ruegeria pomeroyi (strain ATCC 700808 / DSM 15171 / DSS-3) (Silicibacter pomeroyi), this protein is Formate--tetrahydrofolate ligase.